The following is a 1419-amino-acid chain: Agglutinin-like protein 5 (1419 aa).

Residues 1–17 form the signal peptide; that stretch reads MIQQFTLLFLYLSFATA. Cystine bridges form between cysteine 73–cysteine 150, cysteine 96–cysteine 112, cysteine 205–cysteine 298, and cysteine 227–cysteine 256. 8 ALS repeats span residues 365–396, 401–432, 438–469, 474–505, 510–541, 546–577, 582–613, and 618–649; these read TTIT…VDVP, TTVT…VQVP, TTTT…VREP, VTTT…VREP, VTTT…VKEP, and VTTT…IHDP. 2 disordered regions span residues 652-752 and 864-885; these read ESSS…SSSS and ASSF…SSDQ. Asparagine 665 is a glycosylation site (N-linked (GlcNAc...) asparagine). An N-linked (GlcNAc...) asparagine glycan is attached at asparagine 919. Disordered regions lie at residues 926–966, 981–1035, 1051–1093, 1134–1177, and 1211–1252; these read SESE…DSST, TGMP…TKSS, TSTL…KESS, EDNE…TTDV, and ATSL…NRLS. Low complexity-rich tracts occupy residues 928 to 942, 951 to 966, and 993 to 1011; these read SESS…ASES, SEST…DSST, and TSDV…PTSA. Residues 1012 to 1022 show a composition bias toward polar residues; sequence EQSITDNPNID. 2 stretches are compositionally biased toward low complexity: residues 1023 to 1035 and 1051 to 1078; these read SSQT…TKSS and TSTL…GNIN. Polar residues-rich tracts occupy residues 1079–1093 and 1138–1160; these read AGSS…KESS and PNTF…SVLS. A compositionally biased stretch (low complexity) spans 1212–1230; the sequence is TSLRSTSSSSNHATESSGT. Residues asparagine 1301 and asparagine 1326 are each glycosylated (N-linked (GlcNAc...) asparagine). Serine 1398 carries the GPI-anchor amidated serine lipid modification. The propeptide at 1399–1419 is removed in mature form; the sequence is SATKHPSWLLKFISVALFFFL.

Belongs to the ALS family. Forms homodimers through the tandem repeats. Aggregates in amyloid-like structures, with self-propagating secondary-structure changes, amyloid-characteristic dye binding, and induced birefringence. Post-translationally, N-glycosylated and O-glycosylated. In terms of processing, the GPI-anchor is attached to the protein in the endoplasmic reticulum and serves to target the protein to the cell surface. There, the glucosamine-inositol phospholipid moiety is cleaved off and the GPI-modified mannoprotein is covalently attached via its lipidless GPI glycan remnant to the 1,6-beta-glucan of the outer cell wall layer.

The protein resides in the cell membrane. The protein localises to the secreted. It localises to the cell wall. Its function is as follows. Cell surface adhesion protein which mediates both yeast-to-host tissue adherence and yeast aggregation. Plays an important role in the pathogenesis of C.albicans infections. Forms amyloid structures, essential for cell-cell association and cell-substrate adhesion to polystyrene. This Candida albicans (Yeast) protein is Agglutinin-like protein 5 (ALS5).